The primary structure comprises 891 residues: DNA mismatch repair protein MutS (891 aa).

639-646 (GPNMAGKS) is a binding site for ATP. A disordered region spans residues 827–854 (TIQEARPSAQGSEEKTPSSPAEKGLSLF).

The protein belongs to the DNA mismatch repair MutS family.

Its function is as follows. This protein is involved in the repair of mismatches in DNA. It is possible that it carries out the mismatch recognition step. This protein has a weak ATPase activity. The chain is DNA mismatch repair protein MutS from Treponema denticola (strain ATCC 35405 / DSM 14222 / CIP 103919 / JCM 8153 / KCTC 15104).